A 685-amino-acid chain; its full sequence is Heat shock protein homolog SSE1 (685 aa).

Positions 651–685 (QALRSNQEASKMADLSAKLAAQRKAEAEAKENAKE) are disordered. Residues 673-685 (RKAEAEAKENAKE) show a composition bias toward basic and acidic residues.

The protein belongs to the heat shock protein 70 family.

It is found in the cytoplasm. The protein is Heat shock protein homolog SSE1 (SSE1) of Naumovozyma castellii (Yeast).